The sequence spans 273 residues: Fos-related antigen 1 (273 aa).

Disordered stretches follow at residues 1–46 (MYRD…IDSS) and 60–114 (GPTG…RRER). A compositionally biased stretch (low complexity) spans 7-35 (EPGPSSGAGSPYGRPAQPPQAQAQTAQQQ). Positions 105-168 (EERRRVRRER…ERLELVLEAH (64 aa)) constitute a bZIP domain. Residues 107 to 127 (RRRVRRERNKLAAAKCRNRRK) are basic motif. The segment at 133-161 (LQAETDKLEDEKSGLQREIEELQKQKERL) is leucine-zipper. Over residues 169 to 182 (RPICKIPEGDKKDP) the composition is skewed to basic and acidic residues. Positions 169–273 (RPICKIPEGD…PLGSPTLLAL (105 aa)) are disordered. Composition is skewed to low complexity over residues 217–235 (LHTPTLMTTPSLTPFTPSL) and 254–273 (SSSSGDPSSDPLGSPTLLAL). Ser-267 bears the Phosphoserine mark.

The protein belongs to the bZIP family. Fos subfamily. As to quaternary structure, heterodimer. Interacts with the BAF multiprotein chromatin-remodeling complex subunits SMARCB1 and SMARCD1. Interacts with ARID1A and JUN.

The protein resides in the nucleus. In Mus musculus (Mouse), this protein is Fos-related antigen 1 (Fosl1).